A 336-amino-acid chain; its full sequence is Dihydroorotate dehydrogenase (quinone) (336 aa).

Residues 62-66 and threonine 86 each bind FMN; that span reads AGLDK. Position 66 (lysine 66) interacts with substrate. 111 to 115 is a substrate binding site; the sequence is NRMGF. FMN contacts are provided by asparagine 139 and asparagine 172. Asparagine 172 contributes to the substrate binding site. Serine 175 functions as the Nucleophile in the catalytic mechanism. Position 177 (asparagine 177) interacts with substrate. Residues lysine 217 and threonine 245 each coordinate FMN. 246–247 is a binding site for substrate; that stretch reads NT. Residues glycine 268, glycine 297, and 318 to 319 each bind FMN; that span reads YS.

The protein belongs to the dihydroorotate dehydrogenase family. Type 2 subfamily. In terms of assembly, monomer. Requires FMN as cofactor.

Its subcellular location is the cell membrane. It carries out the reaction (S)-dihydroorotate + a quinone = orotate + a quinol. It functions in the pathway pyrimidine metabolism; UMP biosynthesis via de novo pathway; orotate from (S)-dihydroorotate (quinone route): step 1/1. Catalyzes the conversion of dihydroorotate to orotate with quinone as electron acceptor. This chain is Dihydroorotate dehydrogenase (quinone), found in Pectobacterium atrosepticum (strain SCRI 1043 / ATCC BAA-672) (Erwinia carotovora subsp. atroseptica).